The primary structure comprises 199 residues: Fe/S biogenesis protein NfuA (199 aa).

[4Fe-4S] cluster contacts are provided by Cys151 and Cys154.

Belongs to the NfuA family. As to quaternary structure, homodimer. [4Fe-4S] cluster is required as a cofactor.

Involved in iron-sulfur cluster biogenesis. Binds a 4Fe-4S cluster, can transfer this cluster to apoproteins, and thereby intervenes in the maturation of Fe/S proteins. Could also act as a scaffold/chaperone for damaged Fe/S proteins. The chain is Fe/S biogenesis protein NfuA from Stenotrophomonas maltophilia (strain R551-3).